We begin with the raw amino-acid sequence, 378 residues long: Erythronate-4-phosphate dehydrogenase (378 aa).

The substrate site is built by serine 45 and threonine 66. 2 residues coordinate NAD(+): aspartate 146 and threonine 175. Arginine 208 is a catalytic residue. Aspartate 232 is an NAD(+) binding site. Glutamate 237 is a catalytic residue. Histidine 254 (proton donor) is an active-site residue. Glycine 257 lines the NAD(+) pocket. Residue tyrosine 258 coordinates substrate.

Belongs to the D-isomer specific 2-hydroxyacid dehydrogenase family. PdxB subfamily. As to quaternary structure, homodimer.

It is found in the cytoplasm. It catalyses the reaction 4-phospho-D-erythronate + NAD(+) = (R)-3-hydroxy-2-oxo-4-phosphooxybutanoate + NADH + H(+). The protein operates within cofactor biosynthesis; pyridoxine 5'-phosphate biosynthesis; pyridoxine 5'-phosphate from D-erythrose 4-phosphate: step 2/5. Its function is as follows. Catalyzes the oxidation of erythronate-4-phosphate to 3-hydroxy-2-oxo-4-phosphonooxybutanoate. This is Erythronate-4-phosphate dehydrogenase from Citrobacter koseri (strain ATCC BAA-895 / CDC 4225-83 / SGSC4696).